The chain runs to 258 residues: Imidazole glycerol phosphate synthase subunit HisF (258 aa).

Active-site residues include Asp12 and Asp131.

The protein belongs to the HisA/HisF family. In terms of assembly, heterodimer of HisH and HisF.

The protein resides in the cytoplasm. It carries out the reaction 5-[(5-phospho-1-deoxy-D-ribulos-1-ylimino)methylamino]-1-(5-phospho-beta-D-ribosyl)imidazole-4-carboxamide + L-glutamine = D-erythro-1-(imidazol-4-yl)glycerol 3-phosphate + 5-amino-1-(5-phospho-beta-D-ribosyl)imidazole-4-carboxamide + L-glutamate + H(+). The protein operates within amino-acid biosynthesis; L-histidine biosynthesis; L-histidine from 5-phospho-alpha-D-ribose 1-diphosphate: step 5/9. Its function is as follows. IGPS catalyzes the conversion of PRFAR and glutamine to IGP, AICAR and glutamate. The HisF subunit catalyzes the cyclization activity that produces IGP and AICAR from PRFAR using the ammonia provided by the HisH subunit. This is Imidazole glycerol phosphate synthase subunit HisF from Sinorhizobium fredii (strain NBRC 101917 / NGR234).